The sequence spans 381 residues: Chaperone protein DnaJ (381 aa).

One can recognise a J domain in the interval 5 to 70 (DYYEVLGCDR…QKRGAYDRYG (66 aa)). The segment at 136–214 (GKTAQISIPT…CGGAGRVTRE (79 aa)) adopts a CR-type zinc-finger fold. Residues Cys149, Cys152, Cys166, Cys169, Cys188, Cys191, Cys202, and Cys205 each coordinate Zn(2+). 4 CXXCXGXG motif repeats span residues 149 to 156 (CEVCSGSG), 166 to 173 (CRTCNGAG), 188 to 195 (CPSCQGRG), and 202 to 209 (CPNCGGAG).

It belongs to the DnaJ family. As to quaternary structure, homodimer. Zn(2+) is required as a cofactor.

It is found in the cytoplasm. Participates actively in the response to hyperosmotic and heat shock by preventing the aggregation of stress-denatured proteins and by disaggregating proteins, also in an autonomous, DnaK-independent fashion. Unfolded proteins bind initially to DnaJ; upon interaction with the DnaJ-bound protein, DnaK hydrolyzes its bound ATP, resulting in the formation of a stable complex. GrpE releases ADP from DnaK; ATP binding to DnaK triggers the release of the substrate protein, thus completing the reaction cycle. Several rounds of ATP-dependent interactions between DnaJ, DnaK and GrpE are required for fully efficient folding. Also involved, together with DnaK and GrpE, in the DNA replication of plasmids through activation of initiation proteins. In Azorhizobium caulinodans (strain ATCC 43989 / DSM 5975 / JCM 20966 / LMG 6465 / NBRC 14845 / NCIMB 13405 / ORS 571), this protein is Chaperone protein DnaJ.